The chain runs to 103 residues: Large ribosomal subunit protein bL21 (103 aa).

It belongs to the bacterial ribosomal protein bL21 family. In terms of assembly, part of the 50S ribosomal subunit. Contacts protein L20.

This protein binds to 23S rRNA in the presence of protein L20. This chain is Large ribosomal subunit protein bL21, found in Mycobacteroides abscessus (strain ATCC 19977 / DSM 44196 / CCUG 20993 / CIP 104536 / JCM 13569 / NCTC 13031 / TMC 1543 / L948) (Mycobacterium abscessus).